The chain runs to 195 residues: Imidazoleglycerol-phosphate dehydratase (195 aa).

Belongs to the imidazoleglycerol-phosphate dehydratase family.

It is found in the cytoplasm. The enzyme catalyses D-erythro-1-(imidazol-4-yl)glycerol 3-phosphate = 3-(imidazol-4-yl)-2-oxopropyl phosphate + H2O. The protein operates within amino-acid biosynthesis; L-histidine biosynthesis; L-histidine from 5-phospho-alpha-D-ribose 1-diphosphate: step 6/9. In Paracoccus denitrificans (strain Pd 1222), this protein is Imidazoleglycerol-phosphate dehydratase.